Here is an 85-residue protein sequence, read N- to C-terminus: Protein Vpu (85 aa).

Topologically, residues 1–7 (MHQENLL) are extracellular. Residues 8–28 (ALIALSALCLINVLIWLFNLR) traverse the membrane as a helical segment. Residues 29–85 (IYLVQRKQDRREQEILERLRRIKEIRDDSDYESNEEEQQEVMELIHSHGFANPMFEL) lie on the Cytoplasmic side of the membrane.

The protein belongs to the HIV-1 VPU protein family. Homopentamer. Interacts with host CD4 and BRTC; these interactions induce proteasomal degradation of CD4. Interacts with host BST2; this interaction leads to the degradation of host BST2. Interacts with host FBXW11. Interacts with host AP1M1; this interaction plays a role in the mistrafficking and subsequent degradation of host BST2. Interacts with host RANBP2; this interaction allows Vpu to down-regulate host BLM sumoylation. Phosphorylated by host CK2. This phosphorylation is necessary for interaction with human BTRC and degradation of CD4.

The protein resides in the host membrane. Its activity is regulated as follows. Ion channel activity is inhibited by hexamethylene amiloride in vitro. Functionally, enhances virion budding by targeting host CD4 and Tetherin/BST2 to proteasome degradation. Degradation of CD4 prevents any unwanted premature interactions between viral Env and its host receptor CD4 in the endoplasmic reticulum. Degradation of antiretroviral protein Tetherin/BST2 is important for virion budding, as BST2 tethers new viral particles to the host cell membrane. Mechanistically, Vpu bridges either CD4 or BST2 to BTRC, a substrate recognition subunit of the Skp1/Cullin/F-box protein E3 ubiquitin ligase, induces their ubiquitination and subsequent proteasomal degradation. The alteration of the E3 ligase specificity by Vpu seems to promote the degradation of host IKBKB, leading to NF-kappa-B down-regulation and subsequent apoptosis. Acts as a viroporin that forms an oligomeric ion channel in membranes. Modulates the host DNA repair mechanisms to promote degradation of nuclear viral cDNA in cells that are already productively infected in order to suppress immune sensing and proviral hyper-integration (superinfection). Manipulates PML-NBs and modulates SUMOylation of host BLM protein thereby enhancing its DNA-end processing activity toward viral unintegrated linear DNA. Also inhibits RAD52-mediated homologous repair of viral cDNA, preventing the generation of dead-end circular forms of single copies of the long terminal repeat and permitting sustained nucleolytic attack. In Human immunodeficiency virus type 1 group O (isolate MVP5180) (HIV-1), this protein is Protein Vpu.